A 212-amino-acid chain; its full sequence is Ribosomal RNA small subunit methyltransferase G (212 aa).

S-adenosyl-L-methionine contacts are provided by residues Gly-80, Leu-85, 131–132 (AE), and Arg-146.

It belongs to the methyltransferase superfamily. RNA methyltransferase RsmG family.

It localises to the cytoplasm. It catalyses the reaction guanosine(527) in 16S rRNA + S-adenosyl-L-methionine = N(7)-methylguanosine(527) in 16S rRNA + S-adenosyl-L-homocysteine. Functionally, specifically methylates the N7 position of guanine in position 527 of 16S rRNA. The sequence is that of Ribosomal RNA small subunit methyltransferase G from Xanthomonas axonopodis pv. citri (strain 306).